Reading from the N-terminus, the 522-residue chain is Calcium-dependent protein kinase 4 (522 aa).

Residues 1-10 (MGACFSSHTA) show a composition bias toward polar residues. Positions 1–43 (MGACFSSHTATAAADGGSGKRQQRKGDHKGKLPDGGGGEKEKE) are disordered. Gly2 carries the N-myristoyl glycine lipid modification. The segment covering 29-43 (KGKLPDGGGGEKEKE) has biased composition (basic and acidic residues). A Protein kinase domain is found at 59 to 319 (YQVGRLLGHG…AAQALSHPWV (261 aa)). ATP-binding positions include 65–73 (LGHGQFGYT) and Lys88. Residue Asp185 is the Proton acceptor of the active site. An autoinhibitory domain region spans residues 325–355 (ASEIPVDISVLSNMRQFVKYSRFKQFALRAL). 4 consecutive EF-hand domains span residues 362 to 397 (EELADLKDQFDAIDVDKSGSISIEEMRHALAKDLPW), 399 to 434 (LKGPRVLEIIQAIDSNTDGLVDFEEFVAATLHIHQM), 441 to 476 (RWGLRCQAAFSKFDLDGDGYITPDELRMVQHTGLKG), and 481 to 508 (LLEEADIDKDGRISLSEFRKLLRTASMS). Asp375, Asp377, Ser379, Ser381, Glu386, Asp412, Asn414, Asp416, Glu423, Asp454, Asp456, Asp458, Tyr460, Glu465, Asp486, Asp488, Asp490, Arg492, and Glu497 together coordinate Ca(2+).

This sequence belongs to the protein kinase superfamily. Ser/Thr protein kinase family. CDPK subfamily.

It localises to the membrane. The catalysed reaction is L-seryl-[protein] + ATP = O-phospho-L-seryl-[protein] + ADP + H(+). The enzyme catalyses L-threonyl-[protein] + ATP = O-phospho-L-threonyl-[protein] + ADP + H(+). Activated by calcium. Autophosphorylation may play an important role in the regulation of the kinase activity. May play a role in signal transduction pathways that involve calcium as a second messenger. This is Calcium-dependent protein kinase 4 from Oryza sativa subsp. japonica (Rice).